Here is a 209-residue protein sequence, read N- to C-terminus: Uracil phosphoribosyltransferase (209 aa).

Residues Arg79, Arg104, and 131–139 (DPMLATGGS) contribute to the 5-phospho-alpha-D-ribose 1-diphosphate site. Uracil is bound by residues Ile194 and 199 to 201 (GDA). Residue Asp200 participates in 5-phospho-alpha-D-ribose 1-diphosphate binding.

This sequence belongs to the UPRTase family. It depends on Mg(2+) as a cofactor.

The enzyme catalyses UMP + diphosphate = 5-phospho-alpha-D-ribose 1-diphosphate + uracil. It participates in pyrimidine metabolism; UMP biosynthesis via salvage pathway; UMP from uracil: step 1/1. Allosterically activated by GTP. In terms of biological role, catalyzes the conversion of uracil and 5-phospho-alpha-D-ribose 1-diphosphate (PRPP) to UMP and diphosphate. The chain is Uracil phosphoribosyltransferase from Halalkalibacterium halodurans (strain ATCC BAA-125 / DSM 18197 / FERM 7344 / JCM 9153 / C-125) (Bacillus halodurans).